The sequence spans 116 residues: S-adenosylmethionine decarboxylase proenzyme (116 aa).

The active-site Schiff-base intermediate with substrate; via pyruvic acid is the Ser-62. The residue at position 62 (Ser-62) is a Pyruvic acid (Ser); by autocatalysis. His-67 acts as the Proton acceptor; for processing activity in catalysis. The Proton donor; for catalytic activity role is filled by Cys-82.

It belongs to the prokaryotic AdoMetDC family. Type 1 subfamily. As to quaternary structure, heterotetramer of two alpha and two beta chains arranged as a dimer of alpha/beta heterodimers. Requires pyruvate as cofactor. In terms of processing, is synthesized initially as an inactive proenzyme. Formation of the active enzyme involves a self-maturation process in which the active site pyruvoyl group is generated from an internal serine residue via an autocatalytic post-translational modification. Two non-identical subunits are generated from the proenzyme in this reaction, and the pyruvate is formed at the N-terminus of the alpha chain, which is derived from the carboxyl end of the proenzyme. The post-translation cleavage follows an unusual pathway, termed non-hydrolytic serinolysis, in which the side chain hydroxyl group of the serine supplies its oxygen atom to form the C-terminus of the beta chain, while the remainder of the serine residue undergoes an oxidative deamination to produce ammonia and the pyruvoyl group blocking the N-terminus of the alpha chain.

It carries out the reaction S-adenosyl-L-methionine + H(+) = S-adenosyl 3-(methylsulfanyl)propylamine + CO2. The protein operates within amine and polyamine biosynthesis; S-adenosylmethioninamine biosynthesis; S-adenosylmethioninamine from S-adenosyl-L-methionine: step 1/1. In terms of biological role, catalyzes the decarboxylation of S-adenosylmethionine to S-adenosylmethioninamine (dcAdoMet), the propylamine donor required for the synthesis of the polyamines spermine and spermidine from the diamine putrescine. The protein is S-adenosylmethionine decarboxylase proenzyme of Thermomicrobium roseum (strain ATCC 27502 / DSM 5159 / P-2).